A 551-amino-acid polypeptide reads, in one-letter code: Palmdelphin (551 aa).

Methionine 1 carries the N-acetylmethionine modification. Residues 2 to 106 (EEAELVKERL…LQISTNEEAI (105 aa)) are a coiled coil. Residue lysine 125 forms a Glycyl lysine isopeptide (Lys-Gly) (interchain with G-Cter in SUMO2) linkage. Serine 135 bears the Phosphoserine mark. Lysine 179 is covalently cross-linked (Glycyl lysine isopeptide (Lys-Gly) (interchain with G-Cter in SUMO1); alternate). Lysine 179 participates in a covalent cross-link: Glycyl lysine isopeptide (Lys-Gly) (interchain with G-Cter in SUMO2); alternate. Basic and acidic residues predominate over residues 247–259 (SERNSKSPTEYHD). 2 disordered regions span residues 247–393 (SERN…EDEE) and 450–529 (EEEE…IAGD). At threonine 271 the chain carries Phosphothreonine. Phosphoserine is present on residues serine 321, serine 370, serine 384, and serine 385. Residues 484 to 495 (KRAEVNPHENTN) show a composition bias toward basic and acidic residues. Phosphoserine occurs at positions 498, 515, and 520.

It belongs to the paralemmin family. As to quaternary structure, interacts with GLUL. Cell projection, dendrite. Cell projection, dendritic spine. In terms of processing, phosphorylated.

The protein resides in the cytoplasm. The protein localises to the cell projection. It localises to the dendrite. It is found in the dendritic spine. In Sus scrofa (Pig), this protein is Palmdelphin (PALMD).